The following is a 119-amino-acid chain: Beta-2-microglobulin (119 aa).

The N-terminal stretch at 1-20 is a signal peptide; the sequence is MAPFVAIALLVLLSLSGLEA. The Ig-like C1-type domain occupies 25 to 114; it reads PKIQVYSRHP…VTFSTPKTVK (90 aa). C45 and C100 are oxidised to a cystine.

This sequence belongs to the beta-2-microglobulin family. In terms of assembly, heterodimer of an alpha chain and a beta chain. Beta-2-microglobulin is the beta-chain of major histocompatibility complex class I molecules.

It localises to the secreted. Component of the class I major histocompatibility complex (MHC). Involved in the presentation of peptide antigens to the immune system. The sequence is that of Beta-2-microglobulin (B2M) from Cheracebus torquatus (Collared titi monkey).